Here is a 434-residue protein sequence, read N- to C-terminus: DNA primase DnaG (434 aa).

The region spanning 171 to 250 is the Toprim domain; the sequence is DAIIIVEGRA…AFSPRRRSVE (80 aa). Mg(2+) contacts are provided by Glu177, Asp219, and Asp221. A disordered region spans residues 290–319; it reads GEEEHSSVSQKEEGNNTTPDVPADLPEEPP. A compositionally biased stretch (basic and acidic residues) spans 292 to 303; the sequence is EEHSSVSQKEEG.

Belongs to the archaeal DnaG primase family. As to quaternary structure, forms a ternary complex with MCM helicase and DNA. Requires Mg(2+) as cofactor.

The enzyme catalyses ssDNA + n NTP = ssDNA/pppN(pN)n-1 hybrid + (n-1) diphosphate.. Functionally, RNA polymerase that catalyzes the synthesis of short RNA molecules used as primers for DNA polymerase during DNA replication. The polypeptide is DNA primase DnaG (Methanocorpusculum labreanum (strain ATCC 43576 / DSM 4855 / Z)).